The primary structure comprises 134 residues: Putative STAG3-like protein 2 (134 aa).

The SCD domain occupies 10–95 (PKVTCRDVLP…GRFKDWMVSM (86 aa)).

It belongs to the SCC3 family.

Its subcellular location is the nucleus. The chain is Putative STAG3-like protein 2 (STAG3L2) from Homo sapiens (Human).